Reading from the N-terminus, the 171-residue chain is Anthrone oxygenase dmxR16 (171 aa).

The next 3 membrane-spanning stretches (helical) occupy residues 21–41 (VIAA…ISMI), 67–87 (GHII…FSAL), and 96–116 (YALA…FMTP). N-linked (GlcNAc...) asparagine glycans are attached at residues Asn118 and Asn129. The chain crosses the membrane as a helical span at residues 145 to 165 (WLHATRSMFPLIGAILGFTGI).

Belongs to the anthrone oxygenase family.

The protein resides in the membrane. The enzyme catalyses emodin anthrone + O2 = emodin + H2O + H(+). The protein operates within secondary metabolite biosynthesis. Anthrone oxygenase; part of the gene cluster that mediates the biosynthesis of the dimeric xanthones cryptosporioptides. The pathway begins with the synthesis of atrochrysone thioester by the polyketide synthase dmx-nrPKS. The atrochrysone carboxyl ACP thioesterase dmxR1 then breaks the thioester bond and releases the atrochrysone carboxylic acid from dmx-nrPKS. Atrochrysone carboxylic acid is decarboxylated by the decarboxylase dmxR15, and oxidized by the anthrone oxygenase dmxR16 to yield emodin. Emodin is then reduced to emodin hydroquinone by the oxidoreductase dmxR7. A-ring reduction by the short chain dehydrogenase dmxR18, dehydration by the scytalone dehydratase-like protein dmxR17 and probable spontaneous re-oxidation, results in overall deoxygenation to chrysophanol. Baeyer-Villiger oxidation by the Baeyer-Villiger monooxygenase (BVMO) dmxR6 then yields monodictylactone in equilibrium with monodictyphenone. In the case of the cryptosporioptides biosynthesis, monodictylactone is reduced at C-12 to an alcohol (by the short chain dehydrogenases dmxR12 or dmxR8) and hydroxylated at C-5 by dmxR9, yielding the electron-rich aromatic which could eliminate H(2)O to form the ortho-quinonemethide, followed by tautomerisation to paraquinone and complete the formal reduction to produce the 10-methylgroup. Conjugate addition of C-4a-OH to the resulting paraquinone by the monooxygenase dmxR10 then gives cyclohexadienone, which is then reduced at C-5 by the short chain dehydrogenase dmxR3 to give the dihydroxanthone. The 6,7-epoxide in the cryptosporioptides could be introduced by the cytochrome P450 monooxygenase dmxL3. The highly reducing PKS dmxL2 manufactures butyrate, which is further carboxylated by dmxL1 to form ethylmalonate. It is not yet clear whether the carboxylation occurs while the butyrate is attached to the ACP of dmxL2, but this unusual fungal metabolite could then be esterified to O-5 by the O-acetyltransferase dmxR13. Finally, dimerization performed by dmxR5 gives the observed dimers cryptosporioptides A, B and C as the final products of the pathway. This chain is Anthrone oxygenase dmxR16, found in Cryptosporiopsis sp. (strain 8999).